The chain runs to 722 residues: Pentatricopeptide repeat-containing protein At4g14820 (722 aa).

PPR repeat units follow at residues 75–109 (ESIV…GGRL), 110–140 (DQFS…AFKI), 145–175 (DPFV…MSHR), 176–210 (DVVT…NVMP), 211–245 (DEMI…DVRM), 246–276 (DTHL…MSVR), 277–307 (NLFV…TEKK), 308–342 (DLVC…GIKP), 343–377 (DVVS…GLES), 378–408 (ELSI…MPRR), 409–443 (NVVS…NVEP), 444–479 (NEVT…NITP), and 480–514 (KLEH…SNVV). The segment at 515 to 590 (IWGSLMSACR…EKGLSRIDQN (76 aa)) is type E motif. The tract at residues 591 to 621 (GKSHEFLIGDKRHKQSNEIYAKLDEVVSKLK) is type E(+) motif. Residues 622–722 (LAGYVPDCGS…NGLCSCRDYW (101 aa)) are type DYW motif.

The protein belongs to the PPR family. PCMP-H subfamily.

The sequence is that of Pentatricopeptide repeat-containing protein At4g14820 (PCMP-H3) from Arabidopsis thaliana (Mouse-ear cress).